A 315-amino-acid chain; its full sequence is N-acetyl-gamma-glutamyl-phosphate reductase (315 aa).

C117 is an active-site residue.

It belongs to the NAGSA dehydrogenase family. Type 2 subfamily.

Its subcellular location is the cytoplasm. It carries out the reaction N-acetyl-L-glutamate 5-semialdehyde + phosphate + NADP(+) = N-acetyl-L-glutamyl 5-phosphate + NADPH + H(+). It participates in amino-acid biosynthesis; L-arginine biosynthesis; N(2)-acetyl-L-ornithine from L-glutamate: step 3/4. Catalyzes the NADPH-dependent reduction of N-acetyl-5-glutamyl phosphate to yield N-acetyl-L-glutamate 5-semialdehyde. This is N-acetyl-gamma-glutamyl-phosphate reductase from Burkholderia ambifaria (strain ATCC BAA-244 / DSM 16087 / CCUG 44356 / LMG 19182 / AMMD) (Burkholderia cepacia (strain AMMD)).